The primary structure comprises 270 residues: Bis(5'-nucleosyl)-tetraphosphatase, symmetrical (270 aa).

The protein belongs to the Ap4A hydrolase family.

It carries out the reaction P(1),P(4)-bis(5'-adenosyl) tetraphosphate + H2O = 2 ADP + 2 H(+). Hydrolyzes diadenosine 5',5'''-P1,P4-tetraphosphate to yield ADP. The protein is Bis(5'-nucleosyl)-tetraphosphatase, symmetrical of Cellvibrio japonicus (strain Ueda107) (Pseudomonas fluorescens subsp. cellulosa).